A 202-amino-acid chain; its full sequence is Peptide deformylase 2 (202 aa).

Fe cation is bound by residues C123 and H165. E166 is an active-site residue. H169 lines the Fe cation pocket.

This sequence belongs to the polypeptide deformylase family. Fe(2+) serves as cofactor.

The catalysed reaction is N-terminal N-formyl-L-methionyl-[peptide] + H2O = N-terminal L-methionyl-[peptide] + formate. In terms of biological role, removes the formyl group from the N-terminal Met of newly synthesized proteins. Requires at least a dipeptide for an efficient rate of reaction. N-terminal L-methionine is a prerequisite for activity but the enzyme has broad specificity at other positions. The protein is Peptide deformylase 2 of Vibrio vulnificus (strain YJ016).